Reading from the N-terminus, the 234-residue chain is Glucosamine-6-phosphate deaminase (234 aa).

Aspartate 62 functions as the Proton acceptor; for enolization step in the catalytic mechanism. Asparagine 128 serves as the catalytic For ring-opening step. Histidine 130 serves as the catalytic Proton acceptor; for ring-opening step. Glutamate 135 acts as the For ring-opening step in catalysis.

It belongs to the glucosamine/galactosamine-6-phosphate isomerase family. NagB subfamily.

It carries out the reaction alpha-D-glucosamine 6-phosphate + H2O = beta-D-fructose 6-phosphate + NH4(+). It functions in the pathway amino-sugar metabolism; N-acetylneuraminate degradation; D-fructose 6-phosphate from N-acetylneuraminate: step 5/5. In terms of biological role, catalyzes the reversible isomerization-deamination of glucosamine 6-phosphate (GlcN6P) to form fructose 6-phosphate (Fru6P) and ammonium ion. The protein is Glucosamine-6-phosphate deaminase of Streptococcus uberis (strain ATCC BAA-854 / 0140J).